The primary structure comprises 771 residues: Endoplasmin homolog (771 aa).

The N-terminal stretch at 1-24 (MANSSLLRVVLVALLLLGSVTVSA) is a signal peptide. ATP contacts are provided by N63, D109, and F160. N63 carries an N-linked (GlcNAc...) asparagine glycan. The interval 254-282 (AATPESAAEERSLDEGAVEEDPDKEGDTQ) is disordered. N306 and N402 each carry an N-linked (GlcNAc...) asparagine glycan. The disordered stretch occupies residues 727–771 (ADDSLLPPDDAEYTVSDTETEEEEEQPKVDTNAHEEAETDGEGDL). Positions 752 to 762 (QPKVDTNAHEE) are enriched in basic and acidic residues. The short motif at 768–771 (EGDL) is the Prevents secretion from ER element.

It belongs to the heat shock protein 90 family. In terms of assembly, homotetramer.

Its subcellular location is the endoplasmic reticulum. Its function is as follows. Molecular chaperone that functions in the processing and transport of secreted proteins. Required for the synthesis of lipophosphoglycan (LPG), a cell surface glycoconjugate. Necessary for the attachment of the galactosyl residue to the mannose within the phosphoglycan repeats of the nascent LPG chain. Also required for addition of phosphoglycan to acid phosphatase. Not required for normal growth. Has ATPase activity. Binds heparin with micromolar affinity which may facilitate infection of host cells. The polypeptide is Endoplasmin homolog (Leishmania donovani).